We begin with the raw amino-acid sequence, 268 residues long: Eukaryotic translation initiation factor 3 subunit G-2 (268 aa).

Positions serine 187–proline 265 constitute an RRM domain.

This sequence belongs to the eIF-3 subunit G family. As to quaternary structure, component of the eukaryotic translation initiation factor 3 (eIF-3) complex. The eIF-3 complex interacts with pix.

Its subcellular location is the cytoplasm. Its function is as follows. RNA-binding component of the eukaryotic translation initiation factor 3 (eIF-3) complex, which is involved in protein synthesis of a specialized repertoire of mRNAs and, together with other initiation factors, stimulates binding of mRNA and methionyl-tRNAi to the 40S ribosome. The eIF-3 complex specifically targets and initiates translation of a subset of mRNAs involved in cell proliferation. This subunit can bind 18S rRNA. This chain is Eukaryotic translation initiation factor 3 subunit G-2, found in Drosophila willistoni (Fruit fly).